Here is a 44-residue protein sequence, read N- to C-terminus: Protein Tat (44 aa).

Residues 1–44 form a disordered region; the sequence is APEDSQSHQVSLSKQPASQAGGDPTGPKESKKKVESETETDPVP. Over residues 7–18 the composition is skewed to polar residues; sequence SHQVSLSKQPAS. Lys14 participates in a covalent cross-link: Glycyl lysine isopeptide (Lys-Gly) (interchain with G-Cter in ubiquitin). A Cell attachment site motif is present at residues 21–23; that stretch reads GGD. The segment covering 26–36 has biased composition (basic and acidic residues); the sequence is GPKESKKKVES.

It belongs to the lentiviruses Tat family. As to quaternary structure, interacts with host CCNT1. Associates with the P-TEFb complex composed at least of Tat, P-TEFb (CDK9 and CCNT1), TAR RNA, RNA Pol II. Recruits the HATs CREBBP, TAF1/TFIID, EP300, PCAF and GCN5L2. Interacts with host KAT5/Tip60; this interaction targets the latter to degradation. Interacts with the host deacetylase SIRT1. Interacts with host capping enzyme RNGTT; this interaction stimulates RNGTT. Binds to host KDR, and to the host integrins ITGAV/ITGB3 and ITGA5/ITGB1. Interacts with host KPNB1/importin beta-1 without previous binding to KPNA1/importin alpha-1. Interacts with EIF2AK2. Interacts with host nucleosome assembly protein NAP1L1; this interaction may be required for the transport of Tat within the nucleus, since the two proteins interact at the nuclear rim. Interacts with host C1QBP/SF2P32; this interaction involves lysine-acetylated Tat. Interacts with the host chemokine receptors CCR2, CCR3 and CXCR4. Interacts with host DPP4/CD26; this interaction may trigger an anti-proliferative effect. Interacts with host LDLR. Interacts with the host extracellular matrix metalloproteinase MMP1. Interacts with host PRMT6; this interaction mediates Tat's methylation. Interacts with, and is ubiquitinated by MDM2/Hdm2. Interacts with host PSMC3 and HTATIP2. Interacts with STAB1; this interaction may overcome SATB1-mediated repression of IL2 and IL2RA (interleukin) in T cells by binding to the same domain than HDAC1. Interacts (when acetylated) with human CDK13, thereby increasing HIV-1 mRNA splicing and promoting the production of the doubly spliced HIV-1 protein Nef. In terms of processing, acetylation by EP300, CREBBP, GCN5L2/GCN5 and PCAF regulates the transactivation activity of Tat. Post-translationally, phosphorylated by EIF2AK2 on serine and threonine residues adjacent to the basic region important for TAR RNA binding and function. Phosphorylation of Tat by EIF2AK2 is dependent on the prior activation of EIF2AK2 by dsRNA. Asymmetrical arginine methylation by host PRMT6 seems to diminish the transactivation capacity of Tat and affects the interaction with host CCNT1. In terms of processing, polyubiquitination by MDM2 does not target Tat to degradation, but activates its transactivation function and fosters interaction with CCNT1 and TAR RNA.

It is found in the host nucleus. The protein localises to the host nucleolus. Its subcellular location is the host cytoplasm. The protein resides in the secreted. Functionally, transcriptional activator that increases RNA Pol II processivity, thereby increasing the level of full-length viral transcripts. Recognizes a hairpin structure at the 5'-LTR of the nascent viral mRNAs referred to as the transactivation responsive RNA element (TAR) and recruits the cyclin T1-CDK9 complex (P-TEFb complex) that will in turn hyperphosphorylate the RNA polymerase II to allow efficient elongation. The CDK9 component of P-TEFb and other Tat-activated kinases hyperphosphorylate the C-terminus of RNA Pol II that becomes stabilized and much more processive. Other factors such as HTATSF1/Tat-SF1, SUPT5H/SPT5, and HTATIP2 are also important for Tat's function. Besides its effect on RNA Pol II processivity, Tat induces chromatin remodeling of proviral genes by recruiting the histone acetyltransferases (HATs) CREBBP, EP300 and PCAF to the chromatin. This also contributes to the increase in proviral transcription rate, especially when the provirus integrates in transcriptionally silent region of the host genome. To ensure maximal activation of the LTR, Tat mediates nuclear translocation of NF-kappa-B by interacting with host RELA. Through its interaction with host TBP, Tat may also modulate transcription initiation. Tat can reactivate a latently infected cell by penetrating in it and transactivating its LTR promoter. In the cytoplasm, Tat is thought to act as a translational activator of HIV-1 mRNAs. In terms of biological role, extracellular circulating Tat can be endocytosed by surrounding uninfected cells via the binding to several surface receptors such as CD26, CXCR4, heparan sulfate proteoglycans (HSPG) or LDLR. Neurons are rarely infected, but they internalize Tat via their LDLR. Endosomal low pH allows Tat to cross the endosome membrane to enter the cytosol and eventually further translocate into the nucleus, thereby inducing severe cell dysfunctions ranging from cell activation to cell death. Through its interaction with nuclear HATs, Tat is potentially able to control the acetylation-dependent cellular gene expression. Tat seems to inhibit the HAT activity of KAT5/Tip60 and TAF1, and consequently modify the expression of specific cellular genes. Modulates the expression of many cellular genes involved in cell survival, proliferation or in coding for cytokines (such as IL10) or cytokine receptors. May be involved in the derepression of host interleukin IL2 expression. Mediates the activation of cyclin-dependent kinases and dysregulation of microtubule network. Tat plays a role in T-cell and neurons apoptosis. Tat induced neurotoxicity and apoptosis probably contribute to neuroAIDS. Host extracellular matrix metalloproteinase MMP1 cleaves Tat and decreases Tat's mediated neurotoxicity. Circulating Tat also acts as a chemokine-like and/or growth factor-like molecule that binds to specific receptors on the surface of the cells, affecting many cellular pathways. In the vascular system, Tat binds to ITGAV/ITGB3 and ITGA5/ITGB1 integrins dimers at the surface of endothelial cells and competes with bFGF for heparin-binding sites, leading to an excess of soluble bFGF. Binds to KDR/VEGFR-2. All these Tat-mediated effects enhance angiogenesis in Kaposi's sarcoma lesions. This is Protein Tat from Human immunodeficiency virus type 1 group M subtype B (isolate BRVA) (HIV-1).